The chain runs to 294 residues: MKTHHANLALALMLGLSSSATAVAADAPQAVATKAAAPNVKPVAADAHGVIPDGAPGMCARSPACRATAIPADAFVRTADLGRLTDADRDALAALGVKLDIDLRTADEEAQSPDLLARDDRFDYQRISLMGTEKMDLQKMMTSFPDSLGEAYVQWLGHSQPQFKQVFQRIAAQQDGAVLFHCTAGKDRTGIIAGLLLDLAGVPKAEIVHNYAISAHYLEGQPKDSDERADHGAGQAEPGDRPQDGGHGRYRAGQHGAVLAALHSQYGGAEGYLKSIGVSEQEIQQLKVRLGQAG.

The N-terminal stretch at 1–24 is a signal peptide; that stretch reads MKTHHANLALALMLGLSSSATAVA. C182 (phosphocysteine intermediate) is an active-site residue. Basic and acidic residues-rich tracts occupy residues 221–231 and 238–247; these read QPKDSDERADH and PGDRPQDGGH. The segment at 221–252 is disordered; it reads QPKDSDERADHGAGQAEPGDRPQDGGHGRYRA.

It belongs to the protein-tyrosine phosphatase family. As to quaternary structure, monomer.

The catalysed reaction is O-phospho-L-tyrosyl-[protein] + H2O = L-tyrosyl-[protein] + phosphate. This Nostoc commune protein is Tyrosine-protein phosphatase (iphP).